A 263-amino-acid chain; its full sequence is Small ribosomal subunit protein uS2 (263 aa).

The interval 223–246 (KSLLEQDSDANADEAEVSQEEKDA) is disordered. Positions 228-240 (QDSDANADEAEVS) are enriched in acidic residues.

Belongs to the universal ribosomal protein uS2 family.

The sequence is that of Small ribosomal subunit protein uS2 from Campylobacter curvus (strain 525.92).